The primary structure comprises 513 residues: ATP synthase subunit alpha 2 (513 aa).

ATP is bound at residue 169–176 (GDRQTGKT).

It belongs to the ATPase alpha/beta chains family. In terms of assembly, F-type ATPases have 2 components, CF(1) - the catalytic core - and CF(0) - the membrane proton channel. CF(1) has five subunits: alpha(3), beta(3), gamma(1), delta(1), epsilon(1). CF(0) has three main subunits: a(1), b(2) and c(9-12). The alpha and beta chains form an alternating ring which encloses part of the gamma chain. CF(1) is attached to CF(0) by a central stalk formed by the gamma and epsilon chains, while a peripheral stalk is formed by the delta and b chains.

It localises to the cell inner membrane. The catalysed reaction is ATP + H2O + 4 H(+)(in) = ADP + phosphate + 5 H(+)(out). Its function is as follows. Produces ATP from ADP in the presence of a proton gradient across the membrane. The alpha chain is a regulatory subunit. The sequence is that of ATP synthase subunit alpha 2 from Photobacterium profundum (strain SS9).